Consider the following 409-residue polypeptide: Serine/threonine transporter SstT (409 aa).

The next 9 membrane-spanning stretches (helical) occupy residues 14–34 (GSLVLQILVGIIAGIIVATLS), 48–68 (FVGALKAIAPILVFILVAASI), 82–102 (IVILYLFGTFAAAVTAVLMSF), 141–161 (ALMTGNYIGILAWGVGLGLAL), 192–212 (IGIFGLVSSTFASTGFSAIAG), 216–236 (LLLVLLGAMAIMALIINPAIV), 290–310 (IPLGATINMGGAAITITILTL), 322–342 (ILTAILLSVVAGISACGASGV), and 357–377 (FGISNDIAMQVVAVGFIIGVI).

The protein belongs to the dicarboxylate/amino acid:cation symporter (DAACS) (TC 2.A.23) family.

The protein resides in the cell inner membrane. It catalyses the reaction L-serine(in) + Na(+)(in) = L-serine(out) + Na(+)(out). The enzyme catalyses L-threonine(in) + Na(+)(in) = L-threonine(out) + Na(+)(out). In terms of biological role, involved in the import of serine and threonine into the cell, with the concomitant import of sodium (symport system). The polypeptide is Serine/threonine transporter SstT (Shewanella woodyi (strain ATCC 51908 / MS32)).